Here is a 203-residue protein sequence, read N- to C-terminus: Pacifastin-like protease inhibitor cvp4 (203 aa).

A signal peptide spans Met1 to Ala19. 3 consecutive Pacifastin domains span residues Pro23 to Asn59, Asp85 to Asn121, and Asp147 to Tyr184. Intrachain disulfides connect Cys26–Cys41, Cys36–Cys56, Cys39–Cys51, Cys88–Cys103, Cys98–Cys118, and Cys101–Cys113. Basic and acidic residues predominate over residues Arg129–Glu148. A disordered region spans residues Arg129–Cys150. 3 disulfides stabilise this stretch: Cys150-Cys165, Cys160-Cys181, and Cys163-Cys176.

Belongs to the protease inhibitor I19 family. Expressed by the venom gland.

It is found in the secreted. In terms of biological role, inhibits trypsin activity and prophenoloxidase (PPO) activation, an enzyme essential for both clotting and insect innate immune responses. It does not inhibit activity of chymotrypsin and protease K, and has no effect on phenoloxidase (PO) activity. This is Pacifastin-like protease inhibitor cvp4 from Pimpla hypochondriaca (Parasitoid wasp).